Reading from the N-terminus, the 785-residue chain is Endonuclease MutS2 (785 aa).

335–342 lines the ATP pocket; sequence GPNTGGKT. Positions 710 to 785 constitute a Smr domain; sequence LDLRGERYED…GNGVTIVEFK (76 aa).

Belongs to the DNA mismatch repair MutS family. MutS2 subfamily. As to quaternary structure, homodimer. Binds to stalled ribosomes, contacting rRNA.

In terms of biological role, endonuclease that is involved in the suppression of homologous recombination and thus may have a key role in the control of bacterial genetic diversity. Its function is as follows. Acts as a ribosome collision sensor, splitting the ribosome into its 2 subunits. Detects stalled/collided 70S ribosomes which it binds and splits by an ATP-hydrolysis driven conformational change. Acts upstream of the ribosome quality control system (RQC), a ribosome-associated complex that mediates the extraction of incompletely synthesized nascent chains from stalled ribosomes and their subsequent degradation. Probably generates substrates for RQC. The sequence is that of Endonuclease MutS2 from Listeria monocytogenes serotype 4b (strain CLIP80459).